The following is an 88-amino-acid chain: Translation initiation factor IF-1 1 (88 aa).

The S1-like domain maps to 1-72 (MSKEDMIELE…TKGRINFRHP (72 aa)). A disordered region spans residues 66–88 (RINFRHPTANPGAGPRPSHHHRR).

This sequence belongs to the IF-1 family. In terms of assembly, component of the 30S ribosomal translation pre-initiation complex which assembles on the 30S ribosome in the order IF-2 and IF-3, IF-1 and N-formylmethionyl-tRNA(fMet); mRNA recruitment can occur at any time during PIC assembly.

The protein resides in the cytoplasm. In terms of biological role, one of the essential components for the initiation of protein synthesis. Stabilizes the binding of IF-2 and IF-3 on the 30S subunit to which N-formylmethionyl-tRNA(fMet) subsequently binds. Helps modulate mRNA selection, yielding the 30S pre-initiation complex (PIC). Upon addition of the 50S ribosomal subunit IF-1, IF-2 and IF-3 are released leaving the mature 70S translation initiation complex. The protein is Translation initiation factor IF-1 1 of Chromobacterium violaceum (strain ATCC 12472 / DSM 30191 / JCM 1249 / CCUG 213 / NBRC 12614 / NCIMB 9131 / NCTC 9757 / MK).